The chain runs to 91 residues: DNA/RNA-binding protein Alba (91 aa).

K11 bears the N6-acetyllysine mark.

The protein belongs to the histone-like Alba family. Post-translationally, acetylated. Acetylation at Lys-11 decreases DNA-binding affinity.

It is found in the cytoplasm. The protein localises to the chromosome. Binds double-stranded DNA tightly but without sequence specificity. Incubation with DNA in vitro gives fibrous structures 10.3 +/- 1.1 nm in thickness (naked DNA is 1.83 +/- 0.37 nm). This protein does not significantly compact DNA. In Thermococcus kodakarensis (strain ATCC BAA-918 / JCM 12380 / KOD1) (Pyrococcus kodakaraensis (strain KOD1)), this protein is DNA/RNA-binding protein Alba.